The chain runs to 95 residues: Aspartyl/glutamyl-tRNA(Asn/Gln) amidotransferase subunit C (95 aa).

Belongs to the GatC family. Heterotrimer of A, B and C subunits.

The catalysed reaction is L-glutamyl-tRNA(Gln) + L-glutamine + ATP + H2O = L-glutaminyl-tRNA(Gln) + L-glutamate + ADP + phosphate + H(+). The enzyme catalyses L-aspartyl-tRNA(Asn) + L-glutamine + ATP + H2O = L-asparaginyl-tRNA(Asn) + L-glutamate + ADP + phosphate + 2 H(+). In terms of biological role, allows the formation of correctly charged Asn-tRNA(Asn) or Gln-tRNA(Gln) through the transamidation of misacylated Asp-tRNA(Asn) or Glu-tRNA(Gln) in organisms which lack either or both of asparaginyl-tRNA or glutaminyl-tRNA synthetases. The reaction takes place in the presence of glutamine and ATP through an activated phospho-Asp-tRNA(Asn) or phospho-Glu-tRNA(Gln). The protein is Aspartyl/glutamyl-tRNA(Asn/Gln) amidotransferase subunit C of Brucella abortus (strain S19).